A 455-amino-acid polypeptide reads, in one-letter code: N(6)-adenosine-methyltransferase non-catalytic subunit METTL14 (455 aa).

The segment at 21–96 (QQLGAESPDS…QHQEESGPYE (76 aa)) is disordered. The segment covering 37–51 (SKDEQKEIEETRETC) has biased composition (basic and acidic residues). Residues 69 to 82 (EGEDPEEDVEEQKE) show a composition bias toward acidic residues. Interaction with METTL3 regions lie at residues 134–135 (RD) and 236–237 (SG). Positions 244-253 (RMCLRKWGFR) are positively charged region required for RNA-binding. Interaction with METTL3 regions lie at residues 254–257 (RCED) and 277–286 (KAVFQRTKEH). A positively charged region required for RNA-binding region spans residues 296 to 297 (RR). Residues 307–311 (NVDID) form an interaction with METTL3 region. Residues 392 to 455 (ERLRPKSPPP…GGPHRGFPPR (64 aa)) are disordered. Positions 407 to 421 (RGGGAPRGGRGGPAA) are enriched in gly residues. Residues 423 to 441 (RGDRGRERNRPNFRGDRGG) are compositionally biased toward basic and acidic residues.

It belongs to the MT-A70-like family. Heterodimer; heterodimerizes with mettl3 to form an antiparallel heterodimer that constitutes an active methyltransferase. Component of the WMM complex, a N6-methyltransferase complex composed of a catalytic subcomplex, named MAC, and of an associated subcomplex, named MACOM. The MAC subcomplex is composed of mettl3 and mettl14.

It localises to the nucleus. In terms of biological role, the METTL3-METTL14 heterodimer forms a N6-methyltransferase complex that methylates adenosine residues at the N(6) position of some mRNAs and regulates the circadian clock, differentiation of embryonic stem cells and cortical neurogenesis. In the heterodimer formed with mettl3, mettl14 constitutes the RNA-binding scaffold that recognizes the substrate rather than the catalytic core. N6-methyladenosine (m6A), which takes place at the 5'-[AG]GAC-3' consensus sites of some mRNAs, plays a role in mRNA stability and processing. In Danio rerio (Zebrafish), this protein is N(6)-adenosine-methyltransferase non-catalytic subunit METTL14 (mettl14).